The following is a 276-amino-acid chain: MIVRFLCWLTGLLLCTAAYALPQRVISLAPHATEMAYAAGMGEQLIAVSAWSDYPPEAKKLEQVASWQGINLERILALKPDLILAWREGNPQRPLEQLANFSIPIVYLDAKTLDDIPASLRQLATYSRHPEQAERAATDFQQEIGRLRHTGEGQNAASLRVFIQFGTQPLFTSSQATLQSQIVSLCGAENIFSDSPVPWPQVSREQVLRRQPQAIIIGGSPDKIASVQTFWQPQLAVPVITVNEDWFSRSGPRLLLAAQQICSQLTALSPGSSSAK.

The N-terminal stretch at 1–20 is a signal peptide; the sequence is MIVRFLCWLTGLLLCTAAYA. The Fe/B12 periplasmic-binding domain maps to 24–273; that stretch reads RVISLAPHAT…QLTALSPGSS (250 aa). A disulfide bridge links cysteine 186 with cysteine 262.

This sequence belongs to the BtuF family. In terms of assembly, the complex is composed of two ATP-binding proteins (BtuD), two transmembrane proteins (BtuC) and a solute-binding protein (BtuF).

It is found in the periplasm. Functionally, part of the ABC transporter complex BtuCDF involved in vitamin B12 import. Binds vitamin B12 and delivers it to the periplasmic surface of BtuC. In Pectobacterium carotovorum subsp. carotovorum (strain PC1), this protein is Vitamin B12-binding protein.